Reading from the N-terminus, the 203-residue chain is Proteasome subunit beta 2 (203 aa).

A propeptide spans 1 to 9 (MGEEVQIGA) (removed in mature form; by autocatalysis). Thr10 acts as the Nucleophile in catalysis.

It belongs to the peptidase T1B family. The 20S proteasome core is composed of 14 alpha and 14 beta subunits that assemble into four stacked heptameric rings, resulting in a barrel-shaped structure. The two inner rings, each composed of seven catalytic beta subunits, are sandwiched by two outer rings, each composed of seven alpha subunits. The catalytic chamber with the active sites is on the inside of the barrel. Has a gated structure, the ends of the cylinder being occluded by the N-termini of the alpha-subunits. Is capped at one or both ends by the proteasome regulatory ATPase, PAN.

Its subcellular location is the cytoplasm. It carries out the reaction Cleavage of peptide bonds with very broad specificity.. The formation of the proteasomal ATPase PAN-20S proteasome complex, via the docking of the C-termini of PAN into the intersubunit pockets in the alpha-rings, triggers opening of the gate for substrate entry. Interconversion between the open-gate and close-gate conformations leads to a dynamic regulation of the 20S proteasome proteolysis activity. Component of the proteasome core, a large protease complex with broad specificity involved in protein degradation. This is Proteasome subunit beta 2 from Pyrobaculum aerophilum (strain ATCC 51768 / DSM 7523 / JCM 9630 / CIP 104966 / NBRC 100827 / IM2).